Consider the following 317-residue polypeptide: Ribosomal protein L11 methyltransferase (317 aa).

Threonine 158, glycine 179, aspartate 201, and asparagine 244 together coordinate S-adenosyl-L-methionine.

It belongs to the methyltransferase superfamily. PrmA family.

Its subcellular location is the cytoplasm. The enzyme catalyses L-lysyl-[protein] + 3 S-adenosyl-L-methionine = N(6),N(6),N(6)-trimethyl-L-lysyl-[protein] + 3 S-adenosyl-L-homocysteine + 3 H(+). Functionally, methylates ribosomal protein L11. This Streptococcus thermophilus (strain CNRZ 1066) protein is Ribosomal protein L11 methyltransferase.